We begin with the raw amino-acid sequence, 336 residues long: 4-hydroxy-2-oxovalerate aldolase (336 aa).

The Pyruvate carboxyltransferase domain maps to 5–255 (IRIIDSTLRD…ETGVDLYKIM (251 aa)). 13–14 (RD) contributes to the substrate binding site. Asp14 is a Mn(2+) binding site. His17 (proton acceptor) is an active-site residue. Residues Ser167 and His194 each contribute to the substrate site. His194 and His196 together coordinate Mn(2+). Tyr285 contacts substrate.

This sequence belongs to the 4-hydroxy-2-oxovalerate aldolase family.

It catalyses the reaction (S)-4-hydroxy-2-oxopentanoate = acetaldehyde + pyruvate. The protein is 4-hydroxy-2-oxovalerate aldolase (mhpE) of Carboxydothermus hydrogenoformans (strain ATCC BAA-161 / DSM 6008 / Z-2901).